Reading from the N-terminus, the 225-residue chain is Uridylate kinase (225 aa).

9–10 (GS) is an ATP binding site. Gly44 provides a ligand contact to UMP. The ATP site is built by Gly45 and Arg49. UMP contacts are provided by residues Asp66 and 114-120 (THPGHTT). ATP-binding residues include Thr140, Asn141, Tyr146, and Asp149.

It belongs to the UMP kinase family. Homohexamer.

Its subcellular location is the cytoplasm. The enzyme catalyses UMP + ATP = UDP + ADP. The protein operates within pyrimidine metabolism; CTP biosynthesis via de novo pathway; UDP from UMP (UMPK route): step 1/1. Its activity is regulated as follows. Inhibited by UTP. Functionally, catalyzes the reversible phosphorylation of UMP to UDP. This chain is Uridylate kinase, found in Thermococcus gammatolerans (strain DSM 15229 / JCM 11827 / EJ3).